The primary structure comprises 149 residues: UPF0178 protein CPR_2251 (149 aa).

Belongs to the UPF0178 family.

This is UPF0178 protein CPR_2251 from Clostridium perfringens (strain SM101 / Type A).